Consider the following 738-residue polypeptide: Ethylene receptor 1 (738 aa).

A run of 3 helical transmembrane segments spans residues 23-43 (ISDF…IYFV), 53-73 (WVLV…LINL), and 92-112 (VLTA…IPDL). Residues Cys65 and His69 each contribute to the Cu cation site. Residues 158-307 (DRHTILKTTL…VVADQVAVAL (150 aa)) enclose the GAF domain. In terms of domain architecture, Histidine kinase spans 350–585 (VMNHEMRTPM…IFDVKLGISE (236 aa)). A Phosphohistidine; by autocatalysis modification is found at His353. Residues 470–473 (NAVK), Asp513, Lys529, Ser544, and Leu548 each bind ADP. The Response regulatory domain occupies 611 to 729 (KVLVMDENGV…NIRDVLSDLL (119 aa)). 4-aspartylphosphate is present on Asp659. Lys714 participates in a covalent cross-link: Glycyl lysine isopeptide (Lys-Gly) (interchain with G-Cter in ubiquitin).

The protein belongs to the ethylene receptor family. In terms of assembly, homodimer; disulfide-linked. Heteromer with ERS1, ERS2, ETR2 and EIN4. Interacts with AHP1, AHP2 and AHP3. Interacts with RTE1. Interacts with EIN2. Cu cation serves as cofactor. Autophosphorylated. Phosphorylation at His-353 modulates the interaction with EIN2. In terms of tissue distribution, leaves, roots, stems, seedlings, flowers, anthers, carpels and ovules.

Its subcellular location is the endoplasmic reticulum membrane. The enzyme catalyses ATP + protein L-histidine = ADP + protein N-phospho-L-histidine.. In terms of biological role, ethylene receptor related to bacterial two-component regulators. Acts as a redundant negative regulator of ethylene signaling. In the presence of ethylene, the auto-kinase activity of ETR1 is inhibited and the non-phosphorylated kinase domain binds tightly to the corresponding domain of EIN2. The polypeptide is Ethylene receptor 1 (Arabidopsis thaliana (Mouse-ear cress)).